Consider the following 150-residue polypeptide: Ribonuclease K6 (150 aa).

The N-terminal stretch at 1–23 is a signal peptide; the sequence is MVLCFPLLLLLLVLWGPVCPLHA. The active-site Proton acceptor is the H38. 4 cysteine pairs are disulfide-bonded: C46–C104, C60–C114, C78–C129, and C85–C92. An N-linked (GlcNAc...) asparagine glycan is attached at N55. Substrate contacts are provided by residues 61–65 and K86; that span reads KHQNT. The N-linked (GlcNAc...) asparagine glycan is linked to N100. Position 105 (R105) interacts with substrate. H145 functions as the Proton donor in the catalytic mechanism.

The protein belongs to the pancreatic ribonuclease family. In terms of assembly, interacts (via N-terminus) with bacterial lipopolysaccharide (LPS). As to expression, highly expressed in spleen (at protein level). Has little or no expression in healthy kidneys (at protein level). Detected in interstitial leukocytes in infected kidneys (at protein level). Expressed in ureter where it localizes to urothelial and submucosal leukocytes (at protein level). Strong expression in lung and thymus, and lower expression in heart, placenta, pancreas, liver, brain and skeletal muscle. Also expressed in monocytes and neutrophils.

The protein localises to the secreted. Its subcellular location is the lysosome. The protein resides in the cytoplasmic granule. In terms of biological role, ribonuclease which shows a preference for the pyrimidines uridine and cytosine. Has potent antibacterial activity against a range of Gram-positive and Gram-negative bacteria, including P.aeruginosa, A.baumanii, M.luteus, S.aureus, E.faecalis, E.faecium, S.saprophyticus and E.coli. Causes loss of bacterial membrane integrity, and also promotes agglutination of Gram-negative bacteria. Probably contributes to urinary tract sterility. Bactericidal activity is independent of RNase activity. This is Ribonuclease K6 (RNASE6) from Homo sapiens (Human).